Consider the following 249-residue polypeptide: Small ribosomal subunit protein uS2 (249 aa).

This sequence belongs to the universal ribosomal protein uS2 family.

This Acinetobacter baylyi (strain ATCC 33305 / BD413 / ADP1) protein is Small ribosomal subunit protein uS2.